The following is a 162-amino-acid chain: CASP-like protein 0U1 (162 aa).

Residues 1-11 (MAAVEAAKTPR) lie on the Cytoplasmic side of the membrane. The helical transmembrane segment at 12–32 (FILLIIEWVFALVAFAVMGHY) threads the bilayer. The Extracellular segment spans residues 33 to 43 (LFDDRRSSFEY). Residues 44–64 (LTAICILVWLVVMIYMVILCC) form a helical membrane-spanning segment. Residues 65-69 (GRALP) lie on the Cytoplasmic side of the membrane. A helical membrane pass occupies residues 70–90 (PLIEAAIFLLFAILVFIAFLV). At 91 to 123 (TAVKCNNSETIVIAGQTISRKVCEGESEPKAAA) the chain is on the extracellular side. N-linked (GlcNAc...) asparagine glycosylation is present at N96. Residues 124 to 144 (AFAFLLGLLLAGSSVLGCIAF) traverse the membrane as a helical segment. The Cytoplasmic segment spans residues 145–162 (RRPSAPPLSSFQNPTSSV).

Belongs to the Casparian strip membrane proteins (CASP) family. Homodimer and heterodimers.

The protein localises to the cell membrane. In Chlorokybus atmophyticus (Soil alga), this protein is CASP-like protein 0U1.